A 174-amino-acid polypeptide reads, in one-letter code: Squamosa promoter-binding-like protein 4 (174 aa).

Residues 1–42 (MEGKRSQGQGYMKKKSYLVEEDMETDTDEEEEVGRDRVRGSR) form a disordered region. A compositionally biased stretch (acidic residues) spans 19-33 (VEEDMETDTDEEEEV). The SBP-type zinc-finger motif lies at 51–128 (LRLCQVDRCT…AGHNERRRKS (78 aa)). Residues Cys54, Cys59, Cys76, His79, Cys95, Cys98, His102, and Cys114 each coordinate Zn(2+). The Bipartite nuclear localization signal motif lies at 111–127 (KRSCRRRLAGHNERRRK). Residues 118 to 127 (LAGHNERRRK) are compositionally biased toward basic residues. 2 disordered regions span residues 118-148 (LAGH…GQVV) and 155-174 (SRVE…PQIR). Residues 163 to 174 (MPNSSFKRPQIR) show a composition bias toward polar residues.

Zn(2+) serves as cofactor. Expressed in the rib meristem and inter-primordial tissue of the inflorescence apex.

The protein resides in the nucleus. Its subcellular location is the cytoplasm. Its function is as follows. Trans-acting factor that binds specifically to the consensus nucleotide sequence 5'-TNCGTACAA-3' of AP1 promoter. Promotes both vegetative phase change and flowering. The polypeptide is Squamosa promoter-binding-like protein 4 (SPL4) (Arabidopsis thaliana (Mouse-ear cress)).